The primary structure comprises 229 residues: Urease accessory protein UreF (229 aa).

This sequence belongs to the UreF family. As to quaternary structure, ureD, UreF and UreG form a complex that acts as a GTP-hydrolysis-dependent molecular chaperone, activating the urease apoprotein by helping to assemble the nickel containing metallocenter of UreC. The UreE protein probably delivers the nickel.

Its subcellular location is the cytoplasm. Functionally, required for maturation of urease via the functional incorporation of the urease nickel metallocenter. In Methylobacterium radiotolerans (strain ATCC 27329 / DSM 1819 / JCM 2831 / NBRC 15690 / NCIMB 10815 / 0-1), this protein is Urease accessory protein UreF.